The following is a 97-amino-acid chain: Co-chaperonin GroES (97 aa).

Belongs to the GroES chaperonin family. In terms of assembly, heptamer of 7 subunits arranged in a ring. Interacts with the chaperonin GroEL.

The protein localises to the cytoplasm. Its function is as follows. Together with the chaperonin GroEL, plays an essential role in assisting protein folding. The GroEL-GroES system forms a nano-cage that allows encapsulation of the non-native substrate proteins and provides a physical environment optimized to promote and accelerate protein folding. GroES binds to the apical surface of the GroEL ring, thereby capping the opening of the GroEL channel. The protein is Co-chaperonin GroES of Azotobacter vinelandii (strain DJ / ATCC BAA-1303).